The primary structure comprises 661 residues: Immunoglobulin-like domain-containing receptor 2 (661 aa).

The N-terminal stretch at 1 to 35 (MPAFPTLDLDGKLGKMDRVVLGWTAVFWLTAMVEG) is a signal peptide. The 142-residue stretch at 36-177 (LQVTVPDKKK…LEGKNEDSVE (142 aa)) folds into the Ig-like V-type domain. Topologically, residues 36–201 (LQVTVPDKKK…PSFAVEIMPE (166 aa)) are lumenal. Cysteine 57 and cysteine 160 are oxidised to a cystine. The chain crosses the membrane as a helical span at residues 202–222 (WVFVGLVILGIFLFFVLVGIC). At 223-661 (WCQCCPHSCC…DFPTRMSLVV (439 aa)) the chain is on the cytoplasmic side. 3 disordered regions span residues 288–310 (LMDK…HSVR), 410–429 (EDRE…MLSR), and 453–661 (QRSR…SLVV). 2 stretches are compositionally biased toward basic and acidic residues: residues 410–428 (EDRE…EMLS) and 463–478 (HEAR…ESRA). Phosphoserine is present on serine 487. The segment covering 491–506 (YYGRGRSREPPGDGER) has biased composition (basic and acidic residues). At arginine 559 the chain carries Omega-N-methylarginine. Serine 594 is modified (phosphoserine). Residues 595-607 (EGEDEDDAADEDA) show a composition bias toward acidic residues. A compositionally biased stretch (basic and acidic residues) spans 628-639 (RGRDLSFHSNSE).

It belongs to the immunoglobulin superfamily. LISCH7 family. As to quaternary structure, interacts with MARVELD2 and OCLN. Interacts with P4HB and HSPA5; the interaction with HSPA5 stabilizes ILDR2 expression. Interacts (via C-terminus) with TRA2A, TRA2B and SRSF1. Expressed in epithelial tissues, mainly in liver, kidney and colon.

It localises to the endoplasmic reticulum membrane. The protein localises to the cell junction. The protein resides in the tight junction. Its subcellular location is the nucleus. May be involved in ER stress pathways with effects on lipid homeostasis and insulin secretion. With ILDR1 and LSR, involved in the maintain of the epithelial barrier function through the recruitment of MARVELD2/tricellulin to tricellular tight junctions. Also functions as a B7-like protein family member expressed on immune cells and inflamed tissue and with T-cell inhibitory activity. In the inner ear, may regulate alternative pre-mRNA splicing via binding to TRA2A, TRA2B and SRSF1. The protein is Immunoglobulin-like domain-containing receptor 2 of Mus musculus (Mouse).